The following is a 568-amino-acid chain: Urease subunit alpha (568 aa).

Residues 129–568 (GAIDSHIHFI…LPMAQRYFLF (440 aa)) form the Urease domain. Ni(2+) contacts are provided by His-134, His-136, and Lys-217. The residue at position 217 (Lys-217) is an N6-carboxylysine. His-219 is a binding site for substrate. Residues His-246 and His-272 each coordinate Ni(2+). Catalysis depends on His-320, which acts as the Proton donor. Asp-360 is a binding site for Ni(2+).

Belongs to the metallo-dependent hydrolases superfamily. Urease alpha subunit family. As to quaternary structure, heterotrimer of UreA (gamma), UreB (beta) and UreC (alpha) subunits. Three heterotrimers associate to form the active enzyme. Ni cation is required as a cofactor. Post-translationally, carboxylation allows a single lysine to coordinate two nickel ions.

The protein localises to the cytoplasm. The enzyme catalyses urea + 2 H2O + H(+) = hydrogencarbonate + 2 NH4(+). It participates in nitrogen metabolism; urea degradation; CO(2) and NH(3) from urea (urease route): step 1/1. The sequence is that of Urease subunit alpha from Saccharophagus degradans (strain 2-40 / ATCC 43961 / DSM 17024).